Here is a 614-residue protein sequence, read N- to C-terminus: High-affinity choline transporter 1 (614 aa).

Residues 6-26 (GVVSIVLFYLLILVVGIWAGR) form a helical membrane-spanning segment. At 27–44 (KKQSGNDSEEEVMLAGRS) the chain is on the cytoplasmic side. A helical transmembrane segment spans residues 45–65 (IGLFVGIFTMTATWVGGGYIN). The Extracellular portion of the chain corresponds to 66–75 (GTAEAIYTSG). Residues 76–96 (LVWCQAPFGYALSLVFGGIFF) form a helical membrane-spanning segment. The Cytoplasmic segment spans residues 97–119 (ANPMRKQGYITMLDPLQDSFGER). A helical membrane pass occupies residues 120 to 140 (MGGLLFLPALCGEVFWAAGIL). The Extracellular segment spans residues 141–158 (AALGATLSVIIDMDHRTS). A helical transmembrane segment spans residues 159–179 (VILSSCIAIFYTLFGGLYSVA). Residues 180 to 185 (YTDVIQ) lie on the Cytoplasmic side of the membrane. Residues 186-206 (LFCIFIGLWMCIPFAWSNEHV) traverse the membrane as a helical segment. Residues 207–225 (GSLSDLEVDWIGHVEPKKH) lie on the Extracellular side of the membrane. A helical transmembrane segment spans residues 226 to 246 (WLYIDYGLLLVFGGIPWQVYF). Topologically, residues 247-262 (QRVLSSKTAGRAQLLS) are cytoplasmic. The helical transmembrane segment at 263–283 (YVAAAGCILMAIPPVLIGAIA) threads the bilayer. At 284 to 305 (KATPWNETDYKGPYPLTVDETS) the chain is on the extracellular side. The N-linked (GlcNAc...) asparagine glycan is linked to asparagine 289. Residues 306–326 (MILPMVLQYLTPDFVSFFGLG) traverse the membrane as a helical segment. At 327-364 (AVSAAVMSSADSSVLSAASMFARNVYKLIFRQKASEME) the chain is on the cytoplasmic side. The helical transmembrane segment at 365-385 (IIWVMRVAIIVVGILATIMAL) threads the bilayer. Residues 386 to 394 (TIPSIYGLW) lie on the Extracellular side of the membrane. Residues 395-415 (SMCSDLVYVILFPQLLMVVHF) traverse the membrane as a helical segment. Residues 416–424 (KKHCNTYGS) lie on the Cytoplasmic side of the membrane. Residues 425–445 (LSAYIVALAIRLSGGEAILGL) form a helical membrane-spanning segment. Topologically, residues 446-467 (APLIKYPGYDEETKEQMFPFRT) are extracellular. Residues 468-488 (MAMLLSLVTLISVSWWTKMMF) form a helical membrane-spanning segment. At 489-614 (ESGKLPPSYD…PTAEQDNTAF (126 aa)) the chain is on the cytoplasmic side. The segment at 583–614 (ATGVKPSGGGGGHLQSQSGMAMPTAEQDNTAF) is disordered.

Belongs to the sodium:solute symporter (SSF) (TC 2.A.21) family.

The protein resides in the membrane. Functionally, imports choline from the extracellular space to the neuron with high affinity. Rate-limiting step in acetylcholine synthesis. Sodium ion and chloride ion dependent. The sequence is that of High-affinity choline transporter 1 from Drosophila melanogaster (Fruit fly).